The following is a 145-amino-acid chain: Granulysin (145 aa).

Residues 1–22 (MATWALLLLAAMLLGNPGLVFS) form the signal peptide. A Saposin B-type domain is found at 62-142 (LGRDYRTCLT…EDLRLCIPST (81 aa)). Cystine bridges form between cysteine 69–cysteine 132 and cysteine 96–cysteine 107.

A 9 kDa form is produced by proteolytic processing of a 15 kDa protein. In terms of tissue distribution, expressed in natural killer and T-cells.

It localises to the secreted. Functionally, antimicrobial protein that kills intracellular pathogens. Active against a broad range of microbes, including Gram-positive and Gram-negative bacteria, fungi, and parasites. Kills Mycobacterium tuberculosis. This chain is Granulysin (GNLY), found in Homo sapiens (Human).